Reading from the N-terminus, the 22-residue chain is Fuctinin-1 (22 aa).

The disordered stretch occupies residues 1–22 (SASPGLPKGEKEQQEAIEHIDE). The span at 8-22 (KGEKEQQEAIEHIDE) shows a compositional bias: basic and acidic residues.

To human SET/PHAPII protein. Oligomer.

It is found in the cytoplasm. In terms of biological role, has a role in the physiological regulation of fucosylation processes. In Rattus norvegicus (Rat), this protein is Fuctinin-1.